Consider the following 472-residue polypeptide: Pyruvate kinase (472 aa).

Arg33 contributes to the substrate binding site. Positions 35, 37, and 67 each coordinate K(+). ATP is bound at residue 35 to 38 (NFSH). ATP is bound by residues Arg74 and Lys155. Glu220 is a binding site for Mg(2+). Substrate-binding residues include Gly243, Asp244, and Thr276. Residue Asp244 coordinates Mg(2+).

Belongs to the pyruvate kinase family. In terms of assembly, homotetramer. Requires Mg(2+) as cofactor. It depends on K(+) as a cofactor.

The catalysed reaction is pyruvate + ATP = phosphoenolpyruvate + ADP + H(+). It participates in carbohydrate degradation; glycolysis; pyruvate from D-glyceraldehyde 3-phosphate: step 5/5. The polypeptide is Pyruvate kinase (pyk) (Mycobacterium tuberculosis (strain CDC 1551 / Oshkosh)).